A 319-amino-acid chain; its full sequence is MTNTKSNVTKKSLHPRNKHTGNYDFPALIKACAELKPFVETNQYGNESINFSDPQAVKALNKALLAHFYNVPFWDIPQGYLCPPIPGRADYIHNIADLLAITNEGTIPTGKKVKGLDVGVGANCVYLIIGNREYQWSFVGSDIDPQSIKMASFIANNNPSLKGIECRLQKNEENIFKGIIKPTEFFDFTMCNPPFHASEAEATAGTERKQKNLAANKAKKGHAFQEMQNAKALNFGGQKAELWCEGGELAFILKMAQQSREFSLQVQWFTTLISKKENVAELYKELEKIGVKTIKTIEMAQGQKISRFVAWTYQANVNL.

It belongs to the methyltransferase superfamily. METTL16/RlmF family.

It is found in the cytoplasm. The catalysed reaction is adenosine(1618) in 23S rRNA + S-adenosyl-L-methionine = N(6)-methyladenosine(1618) in 23S rRNA + S-adenosyl-L-homocysteine + H(+). Functionally, specifically methylates the adenine in position 1618 of 23S rRNA. In Aliivibrio fischeri (strain ATCC 700601 / ES114) (Vibrio fischeri), this protein is Ribosomal RNA large subunit methyltransferase F.